A 226-amino-acid polypeptide reads, in one-letter code: Enolase-phosphatase E1 (226 aa).

It belongs to the HAD-like hydrolase superfamily. MasA/MtnC family. In terms of assembly, monomer. Mg(2+) serves as cofactor.

It catalyses the reaction 5-methylsulfanyl-2,3-dioxopentyl phosphate + H2O = 1,2-dihydroxy-5-(methylsulfanyl)pent-1-en-3-one + phosphate. It functions in the pathway amino-acid biosynthesis; L-methionine biosynthesis via salvage pathway; L-methionine from S-methyl-5-thio-alpha-D-ribose 1-phosphate: step 3/6. The protein operates within amino-acid biosynthesis; L-methionine biosynthesis via salvage pathway; L-methionine from S-methyl-5-thio-alpha-D-ribose 1-phosphate: step 4/6. Bifunctional enzyme that catalyzes the enolization of 2,3-diketo-5-methylthiopentyl-1-phosphate (DK-MTP-1-P) into the intermediate 2-hydroxy-3-keto-5-methylthiopentenyl-1-phosphate (HK-MTPenyl-1-P), which is then dephosphorylated to form the acireductone 1,2-dihydroxy-3-keto-5-methylthiopentene (DHK-MTPene). The protein is Enolase-phosphatase E1 of Shewanella frigidimarina (strain NCIMB 400).